Here is a 345-residue protein sequence, read N- to C-terminus: GTP cyclohydrolase-2 (345 aa).

The segment at 1–27 is disordered; it reads MTIDNYDNSKQDSSKYEVSGTGDGRNG. A GTP-binding site is contributed by 143-147; sequence RIHSE. The Zn(2+) site is built by cysteine 148, cysteine 159, and cysteine 161. Residues glutamine 164, 197 to 199, and threonine 219 contribute to the GTP site; that span reads EGR. Aspartate 231 functions as the Proton acceptor in the catalytic mechanism. The Nucleophile role is filled by arginine 233. The GTP site is built by threonine 254 and lysine 259. A disordered region spans residues 312 to 345; it reads PLKLHTNPQPTETSEAQNQNRMNSALSSTSTLAI. Over residues 317–345 the composition is skewed to polar residues; that stretch reads TNPQPTETSEAQNQNRMNSALSSTSTLAI.

This sequence belongs to the GTP cyclohydrolase II family. Zn(2+) is required as a cofactor.

It catalyses the reaction GTP + 4 H2O = 2,5-diamino-6-hydroxy-4-(5-phosphoribosylamino)-pyrimidine + formate + 2 phosphate + 3 H(+). The protein operates within cofactor biosynthesis; riboflavin biosynthesis; 5-amino-6-(D-ribitylamino)uracil from GTP: step 1/4. In terms of biological role, catalyzes the conversion of GTP to 2,5-diamino-6-ribosylamino-4(3H)-pyrimidinone 5'-phosphate (DARP), formate and pyrophosphate. In Saccharomyces cerevisiae (strain ATCC 204508 / S288c) (Baker's yeast), this protein is GTP cyclohydrolase-2 (RIB1).